The following is a 1960-amino-acid chain: Intraflagellar transport protein 172 (1960 aa).

2 WD repeats span residues 63 to 103 and 328 to 367; these read SNKD…TDKK and GFLP…YRYC. TPR repeat units follow at residues 1064-1098, 1362-1395, and 1397-1428; these read KADQ…QSYR, CDLF…QEIV, and MYLD…RSIR.

Belongs to the IFT172 family.

The protein resides in the cell projection. Its subcellular location is the cilium. It localises to the flagellum. It is found in the cytoplasm. The protein localises to the cytoskeleton. The protein resides in the flagellum axoneme. Its subcellular location is the flagellum basal body. In terms of biological role, component of the intraflagellar transport complex B (IFT-B) involved in flagellar assembly. The polypeptide is Intraflagellar transport protein 172 (Giardia intestinalis (strain ATCC 50803 / WB clone C6) (Giardia lamblia)).